Here is a 1392-residue protein sequence, read N- to C-terminus: ATP-dependent helicase/nuclease subunit A (1392 aa).

The 592-residue stretch at 4 to 595 (FKPTPAQSKA…IVLGENFRSM (592 aa)) folds into the UvrD-like helicase ATP-binding domain. 25–32 (ASAGSGKT) lines the ATP pocket. Residues 623–929 (AHLKYAATYY…NVMTIHGSKG (307 aa)) form the UvrD-like helicase C-terminal domain.

It belongs to the helicase family. AddA subfamily. Heterodimer of AddA and AddB/RexB. It depends on Mg(2+) as a cofactor.

It catalyses the reaction Couples ATP hydrolysis with the unwinding of duplex DNA by translocating in the 3'-5' direction.. It carries out the reaction ATP + H2O = ADP + phosphate + H(+). Functionally, the heterodimer acts as both an ATP-dependent DNA helicase and an ATP-dependent, dual-direction single-stranded exonuclease. Recognizes the chi site generating a DNA molecule suitable for the initiation of homologous recombination. The AddA nuclease domain is required for chi fragment generation; this subunit has the helicase and 3' -&gt; 5' nuclease activities. This Limosilactobacillus reuteri subsp. reuteri (strain JCM 1112) (Lactobacillus reuteri) protein is ATP-dependent helicase/nuclease subunit A.